A 218-amino-acid polypeptide reads, in one-letter code: Adenylate kinase (218 aa).

10-15 contributes to the ATP binding site; it reads GAGKGT. The segment at 30 to 59 is NMP; that stretch reads STGDMLRAAVKAATPLGLAAKKIMDEGGLV. AMP contacts are provided by residues T31, R36, 57 to 59, 85 to 88, and Q92; these read GLV and GFPR. The segment at 122 to 159 is LID; the sequence is GRRVHLASGRTYHVTFNPPAVPDKDDLTGEPLVQRNDD. Residues R123 and 132–133 each bind ATP; that span reads TY. AMP is bound by residues R156 and R167. G203 is a binding site for ATP.

This sequence belongs to the adenylate kinase family. Monomer.

The protein localises to the cytoplasm. The catalysed reaction is AMP + ATP = 2 ADP. It participates in purine metabolism; AMP biosynthesis via salvage pathway; AMP from ADP: step 1/1. Functionally, catalyzes the reversible transfer of the terminal phosphate group between ATP and AMP. Plays an important role in cellular energy homeostasis and in adenine nucleotide metabolism. The chain is Adenylate kinase from Chlorobaculum tepidum (strain ATCC 49652 / DSM 12025 / NBRC 103806 / TLS) (Chlorobium tepidum).